The chain runs to 375 residues: Serpin B5 (375 aa).

Asparagine 99, asparagine 133, asparagine 188, and asparagine 361 each carry an N-linked (GlcNAc...) asparagine glycan.

Belongs to the serpin family. Ov-serpin subfamily. In terms of assembly, interacts with IRF6. In terms of tissue distribution, normal mammary epithelial cells.

It localises to the secreted. It is found in the extracellular space. Functionally, tumor suppressor. It blocks the growth, invasion, and metastatic properties of mammary tumors. As it does not undergo the S (stressed) to R (relaxed) conformational transition characteristic of active serpins, it exhibits no serine protease inhibitory activity. This Homo sapiens (Human) protein is Serpin B5 (SERPINB5).